Reading from the N-terminus, the 225-residue chain is UPF0758 protein BAV2405 (225 aa).

One can recognise an MPN domain in the interval 103-225 (AMKHPEEVRR…ALSMAERGLI (123 aa)). Zn(2+)-binding residues include His174, His176, and Asp187. The JAMM motif motif lies at 174–187 (HNHPSGNPQPSAAD).

The protein belongs to the UPF0758 family.

In Bordetella avium (strain 197N), this protein is UPF0758 protein BAV2405.